A 444-amino-acid chain; its full sequence is Phosphoribosylamine--glycine ligase (444 aa).

Residues 109-324 enclose the ATP-grasp domain; sequence RNLFKKYEID…FLDVCFAIAE (216 aa). 140-202 contributes to the ATP binding site; the sequence is MTSLGKDVVV…EEKLVGVEFT (63 aa). Residues glutamine 282, glutamate 294, and asparagine 296 each contribute to the Mg(2+) site. Residues glutamine 282, glutamate 294, and asparagine 296 each contribute to the Mn(2+) site.

Belongs to the GARS family. Requires Mg(2+) as cofactor. Mn(2+) serves as cofactor.

It carries out the reaction 5-phospho-beta-D-ribosylamine + glycine + ATP = N(1)-(5-phospho-beta-D-ribosyl)glycinamide + ADP + phosphate + H(+). Its pathway is purine metabolism; IMP biosynthesis via de novo pathway; N(1)-(5-phospho-D-ribosyl)glycinamide from 5-phospho-alpha-D-ribose 1-diphosphate: step 2/2. The protein is Phosphoribosylamine--glycine ligase of Methanococcus maripaludis (strain C5 / ATCC BAA-1333).